The chain runs to 206 residues: Small ribosomal subunit protein uS4 (206 aa).

In terms of domain architecture, S4 RNA-binding spans 96-156; the sequence is CRLDNVVYRM…EKSSNQLRIV (61 aa).

Belongs to the universal ribosomal protein uS4 family. In terms of assembly, part of the 30S ribosomal subunit. Contacts protein S5. The interaction surface between S4 and S5 is involved in control of translational fidelity.

Its function is as follows. One of the primary rRNA binding proteins, it binds directly to 16S rRNA where it nucleates assembly of the body of the 30S subunit. Functionally, with S5 and S12 plays an important role in translational accuracy. The chain is Small ribosomal subunit protein uS4 from Pseudomonas putida (strain W619).